The primary structure comprises 74 residues: U6-agatoxin-Ao1a (74 aa).

Positions 1–19 (MRFYIAFFFLLLAADMALS) are cleaved as a signal peptide. The propeptide occupies 20–30 (FEIGNSEELER). Intrachain disulfides connect Cys44/Cys56, Cys49/Cys61, and Cys55/Cys72.

Expressed by the venom gland.

It localises to the secreted. This Agelena orientalis (Funnel-web spider) protein is U6-agatoxin-Ao1a.